The sequence spans 690 residues: Rho guanine nucleotide exchange factor 4 (690 aa).

The interval 73 to 126 (KTQRKKLQKQAHVERRLHIGAVHKDGVKCWRKTIITSPESLNLPRRSHPLSQSA) is ABR (APC-binding region) domain. Residues 113-145 (LNLPRRSHPLSQSAPTGLNHMGWPEHTPGTAMP) form a disordered region. Residues 194–253 (GSVVCAEALWDHVTMDDQELGFKAGDVIEVMDATNREWWWGRVADGEGWFPASFVRLRVN) form the SH3 domain. Residues 257-282 (PADDDAPLAGNSGAEDGGAEAQSSKD) are disordered. Positions 284 to 468 (MRTNVINEIL…KNVAQLINER (185 aa)) constitute a DH domain. Positions 499 to 606 (ELIYSGELTR…WLKAFARERE (108 aa)) constitute a PH domain.

As to quaternary structure, isoform 3 interacts with RHOA and RAC1, and (via ABR domain) with APC. Found in a complex consisting of ARHGEF4, APC and CTNNB1. As to expression, expressed at high levels in the brain, skeletal muscle and testis and at low levels in the kidney, lung, small intestine, ovary and prostate. Expression is aberrantly enhanced in most colorectal tumors.

The protein resides in the cytoplasm. Its subcellular location is the cell projection. It localises to the ruffle membrane. Functionally, acts as a guanine nucleotide exchange factor (GEF) for RHOA, RAC1 and CDC42 GTPases. Binding of APC may activate RAC1 GEF activity. The APC-ARHGEF4 complex seems to be involved in cell migration as well as in E-cadherin-mediated cell-cell adhesion. Required for MMP9 up-regulation via the JNK signaling pathway in colorectal tumor cells. Involved in tumor angiogenesis and may play a role in intestinal adenoma formation and tumor progression. The protein is Rho guanine nucleotide exchange factor 4 (ARHGEF4) of Homo sapiens (Human).